Here is a 476-residue protein sequence, read N- to C-terminus: Glutamyl-tRNA(Gln) amidotransferase subunit A (476 aa).

Residues Lys-70 and Ser-145 each act as charge relay system in the active site. The active-site Acyl-ester intermediate is Ser-169.

This sequence belongs to the amidase family. GatA subfamily. Heterotrimer of A, B and C subunits.

The catalysed reaction is L-glutamyl-tRNA(Gln) + L-glutamine + ATP + H2O = L-glutaminyl-tRNA(Gln) + L-glutamate + ADP + phosphate + H(+). Allows the formation of correctly charged Gln-tRNA(Gln) through the transamidation of misacylated Glu-tRNA(Gln) in organisms which lack glutaminyl-tRNA synthetase. The reaction takes place in the presence of glutamine and ATP through an activated gamma-phospho-Glu-tRNA(Gln). This Methanosarcina mazei (strain ATCC BAA-159 / DSM 3647 / Goe1 / Go1 / JCM 11833 / OCM 88) (Methanosarcina frisia) protein is Glutamyl-tRNA(Gln) amidotransferase subunit A.